The chain runs to 245 residues: Polynucleotide 3'-phosphatase (245 aa).

The protein belongs to the DNA 3' phosphatase family.

It localises to the nucleus. The catalysed reaction is a 3'end (2'-deoxyribonucleotide 3'-phosphate)-DNA + H2O = a 3'-end 2'-deoxyribonucleotide-DNA + phosphate. Functionally, dephosphorylate DNA's 3'-phosphate termini. Has a role in the repair of breaks in single-stranded DNA. This Saccharomyces mikatae (Yeast) protein is Polynucleotide 3'-phosphatase (TPP1).